Consider the following 101-residue polypeptide: MAKKSMINRELKREKMVAKYADKRIKLKETISDMTASDETRMEAMLELQALPRNASPVRLRNRCAITGRPHGYFRKFGLSRNMLRERVMQGDVPGVRKASW.

Belongs to the universal ribosomal protein uS14 family. In terms of assembly, part of the 30S ribosomal subunit. Contacts proteins S3 and S10.

Functionally, binds 16S rRNA, required for the assembly of 30S particles and may also be responsible for determining the conformation of the 16S rRNA at the A site. The sequence is that of Small ribosomal subunit protein uS14 from Psychrobacter arcticus (strain DSM 17307 / VKM B-2377 / 273-4).